We begin with the raw amino-acid sequence, 424 residues long: Anaerobic glycerol-3-phosphate dehydrogenase subunit B (424 aa).

The protein belongs to the anaerobic G-3-P dehydrogenase subunit B family. As to quaternary structure, composed of a catalytic GlpA/B dimer and of membrane bound GlpC. FMN serves as cofactor.

The catalysed reaction is a quinone + sn-glycerol 3-phosphate = dihydroxyacetone phosphate + a quinol. The protein operates within polyol metabolism; glycerol degradation via glycerol kinase pathway; glycerone phosphate from sn-glycerol 3-phosphate (anaerobic route): step 1/1. Its function is as follows. Conversion of glycerol 3-phosphate to dihydroxyacetone. Uses fumarate or nitrate as electron acceptor. The polypeptide is Anaerobic glycerol-3-phosphate dehydrogenase subunit B (Yersinia pseudotuberculosis serotype I (strain IP32953)).